A 261-amino-acid chain; its full sequence is Putative outer membrane protein TC_0650 (261 aa).

The N-terminal stretch at 1-17 is a signal peptide; sequence MRFLFAFILLCSPWVSE.

Its subcellular location is the cell outer membrane. This Chlamydia muridarum (strain MoPn / Nigg) protein is Putative outer membrane protein TC_0650.